The sequence spans 269 residues: Zinc transporter ZupT (269 aa).

The next 8 helical transmembrane spans lie at 12–32 (AFSI…LVMF), 41–61 (LSFG…TEIF), 75–95 (DHAF…IALI), 126–146 (MMAA…TFFA), 152–172 (AVGM…GISI), 187–207 (VWAC…GYLV), 211–231 (FLSP…MVFL), and 249–269 (TVYG…LFHF). Positions 136 and 139 each coordinate Fe(2+). Zn(2+) is bound by residues Glu-139 and His-164. The Fe(2+) site is built by Asn-165, Glu-168, and Glu-197. Zn(2+) is bound at residue Glu-168.

It belongs to the ZIP transporter (TC 2.A.5) family. ZupT subfamily.

The protein resides in the cell inner membrane. The enzyme catalyses Zn(2+)(in) = Zn(2+)(out). Mediates zinc uptake. May also transport other divalent cations. The chain is Zinc transporter ZupT from Neisseria meningitidis serogroup A / serotype 4A (strain DSM 15465 / Z2491).